The primary structure comprises 149 residues: Calmodulin-1 (149 aa).

Alanine 2 carries the post-translational modification N-acetylalanine. EF-hand domains are found at residues 8–43, 44–79, 81–116, and 117–149; these read EQIAEFKEAFSLFDKDGDGTITTKELGTVMRSLGQN, PTEAELQDMINEVDADGNGTIDFPEFLTMMARKMKD, DSEEEIREAFRVFDKDGNGYISAAELRHVMTNLGEK, and LTDEEVDEMIREADIDGDGQVNYEEFVQMMTAK. Position 21 (aspartate 21) interacts with Ca(2+). Lysine 22 carries the N6-acetyllysine; alternate modification. Residue lysine 22 forms a Glycyl lysine isopeptide (Lys-Gly) (interchain with G-Cter in SUMO2); alternate linkage. Residue lysine 22 forms a Glycyl lysine isopeptide (Lys-Gly) (interchain with G-Cter in ubiquitin); alternate linkage. Aspartate 23, aspartate 25, threonine 27, and glutamate 32 together coordinate Ca(2+). Position 45 is a phosphothreonine; by CaMK4 (threonine 45). Ca(2+) is bound by residues aspartate 57, aspartate 59, asparagine 61, threonine 63, and glutamate 68. Positions 77–149 are necessary and sufficient for interaction with PCP4; the sequence is MKDTDSEEEI…EEFVQMMTAK (73 aa). Phosphoserine is present on serine 82. Aspartate 94 contacts Ca(2+). Lysine 95 is modified (N6-acetyllysine). The Ca(2+) site is built by aspartate 96, asparagine 98, and tyrosine 100. Tyrosine 100 carries the post-translational modification Phosphotyrosine. Phosphoserine is present on serine 102. Position 105 (glutamate 105) interacts with Ca(2+). Threonine 111 carries the phosphothreonine modification. Position 116 is an N6,N6,N6-trimethyllysine; alternate (lysine 116). Lysine 116 bears the N6-methyllysine; alternate mark. Positions 130, 132, 134, and 136 each coordinate Ca(2+). Position 139 is a phosphotyrosine (tyrosine 139). Position 141 (glutamate 141) interacts with Ca(2+).

The protein belongs to the calmodulin family. In terms of assembly, homotetramer. Interacts with MYO1C, MYO5A and RRAD. Interacts with MYO10. Interacts with CEP97, CCP110, TTN/titin and SRY. Interacts with USP6; the interaction is calcium dependent. Interacts with CDK5RAP2. Interacts with SCN5A. Interacts with RYR1. Interacts with FCHO1. Interacts with MIP in a 1:2 stoichiometry; the interaction with the cytoplasmic domains from two MIP subunits promotes MIP water channel closure. Interacts with ORAI1; this may play a role in the regulation of ORAI1-mediated calcium transport. Interacts with IQCF1. Interacts with SYT7. Interacts with CEACAM1 (via cytoplasmic domain); this interaction is in a calcium dependent manner and reduces homophilic cell adhesion through dissociation of dimer. Interacts with RYR2; regulates RYR2 calcium-release channel activity. Interacts with PCP4; regulates calmodulin calcium-binding. Interacts with the heterotetrameric KCNQ2 and KCNQ3 channel; the interaction is calcium-independent, constitutive and participates in the proper assembly of a functional heterotetrameric M channel. Interacts with alpha-synuclein/SNCA. Interacts with SLC9A1 in a calcium-dependent manner. In the absence of Ca(+2), interacts with GIMAP4 (via IQ domain). Interacts with SCN8A; the interaction modulates the inactivation rate of SCN8A. Interaction with KIF1A; the interaction is increased in presence of calcium and increases neuronal dense core vesicles motility. Interacts with KCNN3. Interacts with KCNQ1 (via C-terminus); forms a heterooctameric structure (with 4:4 KCNQ1:CALM stoichiometry) in a calcium-independent manner. Interacts with PIK3C3; the interaction modulates PIK3C3 kinase activity. Interacts with HINT1; interaction increases in the presence of calcium ions. Interacts with HINT3. Interacts with GARIN2; in mature sperm flagella. Interacts with IQUB. Interacts with SLC26A5 (via STAS domain); this interaction is calcium-dependent and the STAS domain interacts with only one lobe of CALM which is an elongated conformation. Ca(2+)-bound CALM1 binds CNGA1:CNGB1 channel (via CaM1 and CaM2 regions); this interaction modulates the affinity of the channel for cNMPs in response to intracellular Ca(2+) levels. Interacts with ITPR1; this interaction inhibits inositol 1,4,5 trisphosphate binding in both the presence and absence of calcium and 1,4,5 trisphosphate-induced calcium release in the presence of calcium. Component of the SIFI complex. Interacts with KCNN4; this interaction allows channel opening. Interacts with KCNN2; this interaction regulates the channel activity through calcium-binding. As to quaternary structure, (Microbial infection) Interacts with Rubella virus protease/methyltransferase p150. (Microbial infection) Interacts with Legionella pneumophila glutamylase SidJ. In terms of assembly, (Microbial infection) Interacts with C.violaceum CopC. C.violaceum CopC interacts specifically with the apo form of calmodulin. As to quaternary structure, (Microbial infection) Interacts with S.flexneri OspC1 and OspC3. S.flexneri OspC1 and OspC3 interact specifically with the apo form of calmodulin and prevents calcium-binding. Ubiquitination results in a strongly decreased activity. In terms of processing, phosphorylation results in a decreased activity.

Its subcellular location is the cytoplasm. The protein resides in the cytoskeleton. It is found in the spindle. It localises to the spindle pole. The protein localises to the microtubule organizing center. Its subcellular location is the centrosome. The protein resides in the cell projection. It is found in the cilium. It localises to the flagellum. Its activity is regulated as follows. (Microbial infection) Inactivated by S.flexneri OspC1 and OspC3 proteins, which specifically bind the apo-form of calmodulin, thereby preventing calcium-binding and activity. In terms of biological role, calmodulin acts as part of a calcium signal transduction pathway by mediating the control of a large number of enzymes, ion channels, aquaporins and other proteins through calcium-binding. Calcium-binding is required for the activation of calmodulin. Among the enzymes to be stimulated by the calmodulin-calcium complex are a number of protein kinases, such as myosin light-chain kinases and calmodulin-dependent protein kinase type II (CaMK2), and phosphatases. Together with CCP110 and centrin, is involved in a genetic pathway that regulates the centrosome cycle and progression through cytokinesis. Is a regulator of voltage-dependent L-type calcium channels. Mediates calcium-dependent inactivation of CACNA1C. Positively regulates calcium-activated potassium channel activity of KCNN2. Forms a potassium channel complex with KCNQ1 and regulates electrophysiological activity of the channel via calcium-binding. Acts as a sensor to modulate the endoplasmic reticulum contacts with other organelles mediated by VMP1:ATP2A2. Its function is as follows. (Microbial infection) Required for Legionella pneumophila SidJ glutamylase activity. (Microbial infection) Required for C.violaceum CopC and S.flexneri OspC3 arginine ADP-riboxanase activity. The protein is Calmodulin-1 of Homo sapiens (Human).